Consider the following 702-residue polypeptide: Arylphorin (702 aa).

A signal peptide spans 1-16 (MQTVLFLAALVSLAAA). Asn211 and Asn481 each carry an N-linked (GlcNAc...) asparagine glycan.

It belongs to the hemocyanin family. As to expression, hemolymph.

The protein localises to the secreted. Its function is as follows. Larval storage protein (LSP) which may serve as a store of amino acids for synthesis of adult proteins. Binds the A.niger cell wall component alpha-1,3-glucan, a fungal pathogen-associated molecular pattern (PAMP) that activates the host immune response. The polypeptide is Arylphorin (LOC113516268) (Galleria mellonella (Greater wax moth)).